The chain runs to 155 residues: Small ribosomal subunit protein uS7cz/uS7cy (155 aa).

This sequence belongs to the universal ribosomal protein uS7 family. In terms of assembly, part of the 30S ribosomal subunit.

Its subcellular location is the plastid. The protein localises to the chloroplast. In terms of biological role, one of the primary rRNA binding proteins, it binds directly to 16S rRNA where it nucleates assembly of the head domain of the 30S subunit. In Citrus sinensis (Sweet orange), this protein is Small ribosomal subunit protein uS7cz/uS7cy (rps7-A).